Here is a 188-residue protein sequence, read N- to C-terminus: CMT1A duplicated region transcript 15 protein (188 aa).

Expressed in fetal heart, kidney, liver, lung and spleen.

The sequence is that of CMT1A duplicated region transcript 15 protein (CDRT15) from Homo sapiens (Human).